The following is a 712-amino-acid chain: MDTSSKENIQLFCKTSVQPVGRPSFKTEYPSSEEKQPCCGELKVFLCALSFVYFAKALAEGYLKSTITQIERRFDIPSSLVGVIDGSFEIGNLLVITFVSYFGAKLHRPKIIGAGCVIMGVGTLLIAMPQFFMEQYKYERYSPSSNSTLSISPCLLESSSQLPVSVMEKSKSKISNECEVDTSSSMWIYVFLGNLLRGIGETPIQPLGIAYLDDFASEDNAAFYIGCVQTVAIIGPIFGFLLGSLCAKLYVDIGFVNLDHITITPKDPQWVGAWWLGYLIAGIISLLAAVPFWYLPKSLPRSQSREDSNSSSEKSKFIIDDHTDYQTPQGENAKIMEMARDFLPSLKNLFGNPVYFLYLCTSTVQFNSLFGMVTYKPKYIEQQYGQSSSRANFVIGLINIPAVALGIFSGGIVMKKFRISVCGAAKLYLGSSVFGYLLFLSLFALGCENSDVAGLTVSYQGTKPVSYHERALFSDCNSRCKCSETKWEPMCGENGITYVSACLAGCQTSNRSGKNIIFYNCTCVGIAASKSGNSSGIVGRCQKDNGCPQMFLYFLVISVITSYTLSLGGIPGYILLLRCIKPQLKSFALGIYTLAIRVLAGIPAPVYFGVLIDTSCLKWGFKRCGSRGSCRLYDSNVFRHIYLGLTVILGTVSILLSIAVLFILKKNYVSKHRSFITKRERTMVSTRFQKENYTTSDHLLQPNYWPGKETQL.

The Cytoplasmic portion of the chain corresponds to 1 to 43; it reads MDTSSKENIQLFCKTSVQPVGRPSFKTEYPSSEEKQPCCGELK. The chain crosses the membrane as a helical span at residues 44 to 63; it reads VFLCALSFVYFAKALAEGYL. Residues 64–82 are Extracellular-facing; sequence KSTITQIERRFDIPSSLVG. A helical membrane pass occupies residues 83 to 103; that stretch reads VIDGSFEIGNLLVITFVSYFG. The Cytoplasmic portion of the chain corresponds to 104-109; sequence AKLHRP. Residues 110-134 traverse the membrane as a helical segment; it reads KIIGAGCVIMGVGTLLIAMPQFFME. The Extracellular segment spans residues 135–184; it reads QYKYERYSPSSNSTLSISPCLLESSSQLPVSVMEKSKSKISNECEVDTSS. Residue Asn146 is glycosylated (N-linked (GlcNAc...) asparagine). The helical transmembrane segment at 185-213 threads the bilayer; it reads SMWIYVFLGNLLRGIGETPIQPLGIAYLD. Over 214-232 the chain is Cytoplasmic; the sequence is DFASEDNAAFYIGCVQTVA. Residues 233-253 form a helical membrane-spanning segment; sequence IIGPIFGFLLGSLCAKLYVDI. At 254–271 the chain is on the extracellular side; that stretch reads GFVNLDHITITPKDPQWV. Residues 272–296 form a helical membrane-spanning segment; that stretch reads GAWWLGYLIAGIISLLAAVPFWYLP. The Cytoplasmic portion of the chain corresponds to 297 to 348; it reads KSLPRSQSREDSNSSSEKSKFIIDDHTDYQTPQGENAKIMEMARDFLPSLKN. A helical transmembrane segment spans residues 349–370; the sequence is LFGNPVYFLYLCTSTVQFNSLF. The Extracellular portion of the chain corresponds to 371–390; the sequence is GMVTYKPKYIEQQYGQSSSR. A helical membrane pass occupies residues 391 to 414; the sequence is ANFVIGLINIPAVALGIFSGGIVM. Residues 415-418 are Cytoplasmic-facing; sequence KKFR. A helical membrane pass occupies residues 419–442; the sequence is ISVCGAAKLYLGSSVFGYLLFLSL. The Extracellular portion of the chain corresponds to 443–554; sequence FALGCENSDV…NGCPQMFLYF (112 aa). Residues 470-525 enclose the Kazal-like domain; sequence RALFSDCNSRCKCSETKWEPMCGENGITYVSACLAGCQTSNRSGKNIIFYNCTCVG. Cystine bridges form between Cys476-Cys506, Cys482-Cys502, and Cys491-Cys523. Asn510, Asn520, and Asn533 each carry an N-linked (GlcNAc...) asparagine glycan. Residues 555–577 traverse the membrane as a helical segment; sequence LVISVITSYTLSLGGIPGYILLL. Residues 578–586 are Cytoplasmic-facing; the sequence is RCIKPQLKS. Residues 587-612 traverse the membrane as a helical segment; sequence FALGIYTLAIRVLAGIPAPVYFGVLI. Topologically, residues 613–646 are extracellular; sequence DTSCLKWGFKRCGSRGSCRLYDSNVFRHIYLGLT. Residues 647–664 traverse the membrane as a helical segment; sequence VILGTVSILLSIAVLFIL. The Cytoplasmic segment spans residues 665–712; sequence KKNYVSKHRSFITKRERTMVSTRFQKENYTTSDHLLQPNYWPGKETQL.

Belongs to the organo anion transporter (TC 2.A.60) family. Highly expressed in brain and in Leydig cells in testis. Localized in nests of Leydig cells (at protein level). Expressed in choroid plexus (at protein level). Not strongly enriched in cerebral microvessels.

The protein localises to the cell membrane. The catalysed reaction is 3,3',5'-triiodo-L-thyronine(out) = 3,3',5'-triiodo-L-thyronine(in). It catalyses the reaction L-thyroxine(out) = L-thyroxine(in). The enzyme catalyses L-thyroxine sulfate(out) = L-thyroxine sulfate(in). Functionally, mediates the Na(+)-independent high affinity transport of organic anions such as the thyroid hormones L-thyroxine (T4), L-thyroxine sulfate (T4S), and 3,3',5'-triiodo-L-thyronine (reverse T3, rT3) at the plasma membrane. Regulates T4 levels in different brain regions by transporting T4, and also by serving as an export pump for T4S, which is a source of T4 after hydrolysis by local sulfatases. Increases the access of these substrates to the intracellular sites where they are metabolized by the deiodinases. Other potential substrates, such as triiodothyronine (T3), 17-beta-glucuronosyl estradiol (17beta-estradiol 17-O-(beta-D-glucuronate)), estrone-3-sulfate (E1S) and sulfobromophthalein (BSP) are transported with much lower efficiency. Transports T4 and E1S in a pH-insensitive manner. Facilitates the transport of thyroid hormones across the blood-brain barrier and into glia and neuronal cells in the brain. This is Solute carrier organic anion transporter family member 1C1 (SLCO1C1) from Homo sapiens (Human).